A 587-amino-acid polypeptide reads, in one-letter code: Arginine--tRNA ligase (587 aa).

A 'HIGH' region motif is present at residues 126-136; sequence ANPTGPLHVGH.

Belongs to the class-I aminoacyl-tRNA synthetase family. As to quaternary structure, monomer.

The protein localises to the cytoplasm. The enzyme catalyses tRNA(Arg) + L-arginine + ATP = L-arginyl-tRNA(Arg) + AMP + diphosphate. This is Arginine--tRNA ligase from Azoarcus sp. (strain BH72).